Consider the following 758-residue polypeptide: General transcription and DNA repair factor IIH helicase subunit XPD (758 aa).

One can recognise a Helicase ATP-binding domain in the interval 7–285 (DVTVYFPYDN…TDAGRLRAEY (279 aa)). An ATP-binding site is contributed by 42-49 (MPTGTGKT). Residues Cys116, Cys134, Cys155, and Cys190 each contribute to the [4Fe-4S] cluster site. The short motif at 234-238 (DEAHN) is the DEAH box element.

It belongs to the helicase family. RAD3/XPD subfamily. In terms of assembly, component of the 7-subunit TFIIH core complex composed of XPB, XPD, TFB1/GTF2H1, GTF2H2/P44, TFB4/GTF2H3, TFB2/GTF2H4 and TFB5/GTF2H5, which is active in NER. The core complex associates with the 3-subunit CDK-activating kinase (CAK) module composed of CYCH1/cyclin H1, CDKD and MAT1/At4g30820 to form the 10-subunit holoenzyme (holo-TFIIH) active in transcription. Interacts with GTF2H2/p44. It depends on [4Fe-4S] cluster as a cofactor. In terms of tissue distribution, expressed at low levels in all tissues.

It is found in the nucleus. It carries out the reaction Couples ATP hydrolysis with the unwinding of duplex DNA at the replication fork by translocating in the 5'-3' direction. This creates two antiparallel DNA single strands (ssDNA). The leading ssDNA polymer is the template for DNA polymerase III holoenzyme which synthesizes a continuous strand.. The enzyme catalyses ATP + H2O = ADP + phosphate + H(+). Functionally, ATP-dependent 5'-3' DNA helicase, component of the general transcription and DNA repair factor IIH (TFIIH) core complex, which is involved in general and transcription-coupled nucleotide excision repair (NER) of damaged DNA and, when complexed to CDK-activating kinase (CAK), involved in transcription by RNA polymerase II. In NER, TFIIH acts by opening DNA around the lesion to allow the excision of the damaged oligonucleotide and its replacement by a new DNA fragment. The ATP-dependent helicase activity of XPD is required for DNA opening. In transcription, TFIIH has an essential role in transcription initiation. When the pre-initiation complex (PIC) has been established, TFIIH is required for promoter opening and promoter escape. Phosphorylation of the C-terminal tail (CTD) of the largest subunit of RNA polymerase II by the kinase module CAK controls the initiation of transcription. XPD acts by forming a bridge between CAK and the core-TFIIH complex. Essential during plant growth. May negatively regulate a common response program mediated by UV damage and heat stress, that leads to tissue death and reduced chloroplast function. The sequence is that of General transcription and DNA repair factor IIH helicase subunit XPD from Arabidopsis thaliana (Mouse-ear cress).